Here is a 272-residue protein sequence, read N- to C-terminus: Ribosomal RNA small subunit methyltransferase A (272 aa).

S-adenosyl-L-methionine contacts are provided by Asn-18, Leu-20, Gly-45, Glu-66, Asp-91, and Asn-113.

It belongs to the class I-like SAM-binding methyltransferase superfamily. rRNA adenine N(6)-methyltransferase family. RsmA subfamily.

It localises to the cytoplasm. The catalysed reaction is adenosine(1518)/adenosine(1519) in 16S rRNA + 4 S-adenosyl-L-methionine = N(6)-dimethyladenosine(1518)/N(6)-dimethyladenosine(1519) in 16S rRNA + 4 S-adenosyl-L-homocysteine + 4 H(+). Its function is as follows. Specifically dimethylates two adjacent adenosines (A1518 and A1519) in the loop of a conserved hairpin near the 3'-end of 16S rRNA in the 30S particle. May play a critical role in biogenesis of 30S subunits. The polypeptide is Ribosomal RNA small subunit methyltransferase A (Yersinia pseudotuberculosis serotype O:1b (strain IP 31758)).